Reading from the N-terminus, the 497-residue chain is Glycerol kinase (497 aa).

T12 is an ADP binding site. The ATP site is built by T12, T13, and S14. Residue T12 coordinates sn-glycerol 3-phosphate. R16 is an ADP binding site. Sn-glycerol 3-phosphate is bound by residues R82, E83, Y134, and D243. 5 residues coordinate glycerol: R82, E83, Y134, D243, and Q244. 2 residues coordinate ADP: T265 and G308. Residues T265, G308, Q312, and G409 each coordinate ATP. ADP-binding residues include G409 and N413.

This sequence belongs to the FGGY kinase family.

The enzyme catalyses glycerol + ATP = sn-glycerol 3-phosphate + ADP + H(+). The protein operates within polyol metabolism; glycerol degradation via glycerol kinase pathway; sn-glycerol 3-phosphate from glycerol: step 1/1. Its activity is regulated as follows. Inhibited by fructose 1,6-bisphosphate (FBP). In terms of biological role, key enzyme in the regulation of glycerol uptake and metabolism. Catalyzes the phosphorylation of glycerol to yield sn-glycerol 3-phosphate. The polypeptide is Glycerol kinase (Nitratidesulfovibrio vulgaris (strain DSM 19637 / Miyazaki F) (Desulfovibrio vulgaris)).